Reading from the N-terminus, the 144-residue chain is Large ribosomal subunit protein uL15 (144 aa).

A disordered region spans residues 1-57 (MFLNTLRPGEGSKHAPKRVGRGIGSGLGKTGGRGHKGLKSRSGGSVKPGFEGGQMPL). The segment covering 21–31 (RGIGSGLGKTG) has biased composition (gly residues).

Belongs to the universal ribosomal protein uL15 family. Part of the 50S ribosomal subunit.

In terms of biological role, binds to the 23S rRNA. The chain is Large ribosomal subunit protein uL15 from Marinomonas sp. (strain MWYL1).